The following is a 336-amino-acid chain: Dihydroorotate dehydrogenase (quinone) (336 aa).

FMN contacts are provided by residues 62–66 (AGLDK) and Thr86. Lys66 contributes to the substrate binding site. Residue 111–115 (NRMGF) participates in substrate binding. FMN is bound by residues Asn139 and Asn172. Asn172 contributes to the substrate binding site. The active-site Nucleophile is the Ser175. Asn177 contacts substrate. Positions 217 and 245 each coordinate FMN. 246 to 247 (NT) contacts substrate. FMN-binding positions include Gly268, Gly297, and 318–319 (YS).

Belongs to the dihydroorotate dehydrogenase family. Type 2 subfamily. Monomer. It depends on FMN as a cofactor.

It is found in the cell membrane. The catalysed reaction is (S)-dihydroorotate + a quinone = orotate + a quinol. It functions in the pathway pyrimidine metabolism; UMP biosynthesis via de novo pathway; orotate from (S)-dihydroorotate (quinone route): step 1/1. Its function is as follows. Catalyzes the conversion of dihydroorotate to orotate with quinone as electron acceptor. In Pectobacterium atrosepticum (strain SCRI 1043 / ATCC BAA-672) (Erwinia carotovora subsp. atroseptica), this protein is Dihydroorotate dehydrogenase (quinone).